A 47-amino-acid chain; its full sequence is Photosystem II reaction center protein K (47 aa).

A propeptide spanning residues 1–10 (MAPLTLDLLA) is cleaved from the precursor. A helical membrane pass occupies residues 26-46 (LPLIPLLFFLLVFVWQAAVGF).

The protein belongs to the PsbK family. In terms of assembly, PSII is composed of 1 copy each of membrane proteins PsbA, PsbB, PsbC, PsbD, PsbE, PsbF, PsbH, PsbI, PsbJ, PsbK, PsbL, PsbM, PsbT, PsbX, PsbY, Psb30/Ycf12, peripheral proteins PsbO, CyanoQ (PsbQ), PsbU, PsbV and a large number of cofactors. It forms dimeric complexes.

The protein localises to the cellular thylakoid membrane. Its function is as follows. One of the components of the core complex of photosystem II (PSII). PSII is a light-driven water:plastoquinone oxidoreductase that uses light energy to abstract electrons from H(2)O, generating O(2) and a proton gradient subsequently used for ATP formation. It consists of a core antenna complex that captures photons, and an electron transfer chain that converts photonic excitation into a charge separation. This Prochlorococcus marinus (strain SARG / CCMP1375 / SS120) protein is Photosystem II reaction center protein K.